Reading from the N-terminus, the 303-residue chain is MRLRHVVSSLDLTRDDYFRIFELADKFSNVKKLNYLSGKVVSLAFFEPSTRTAQSFHTAAIKLGADVIGFASEESTSIAKGENLADTIRMLNNYSNCIVMRHKFDGAALFASEISDIPIINAGDGKHEHPTQALIDLYTIYKVFGEIDGRTFGLLGDLKYARTVNSLLRALTRFKPKKVFLISPSQLKVRREILDGLNYPVIETENPYDVIQDIDVLYVTRIQKERFVDEVEYEKVKESYVVDLKLVNMMKKDGIILHPLPRVTEIDRKVDKTTNAKYFYQASLAVPVRMALFYEVLGERKDD.

Positions 51 and 52 each coordinate carbamoyl phosphate. Lys-80 serves as a coordination point for L-aspartate. Residues Arg-101, His-129, and Gln-132 each contribute to the carbamoyl phosphate site. The L-aspartate site is built by Arg-162 and Arg-221. Carbamoyl phosphate contacts are provided by Leu-260 and Pro-261.

Belongs to the aspartate/ornithine carbamoyltransferase superfamily. ATCase family. Heterooligomer of catalytic and regulatory chains.

It carries out the reaction carbamoyl phosphate + L-aspartate = N-carbamoyl-L-aspartate + phosphate + H(+). It participates in pyrimidine metabolism; UMP biosynthesis via de novo pathway; (S)-dihydroorotate from bicarbonate: step 2/3. Its function is as follows. Catalyzes the condensation of carbamoyl phosphate and aspartate to form carbamoyl aspartate and inorganic phosphate, the committed step in the de novo pyrimidine nucleotide biosynthesis pathway. This Saccharolobus islandicus (strain Y.N.15.51 / Yellowstone #2) (Sulfolobus islandicus) protein is Aspartate carbamoyltransferase catalytic subunit.